A 99-amino-acid polypeptide reads, in one-letter code: Cysteine-rich C-terminal protein 1 (99 aa).

Disordered regions lie at residues 1-42 and 65-99; these read MSSQ…CCGS and RRRR…CSGC. Residues 22–32 are compositionally biased toward pro residues; sequence APCPAPAPTPA. Residues 83–99 show a composition bias toward low complexity; sequence QRSQRSNNRSSGCCSGC.

The sequence is that of Cysteine-rich C-terminal protein 1 (CRCT1) from Homo sapiens (Human).